Reading from the N-terminus, the 200-residue chain is Max dimerization protein 3 (200 aa).

Disordered stretches follow at residues 26-56 (EHGYASILPCDPATPGRRKRQRTNSNPDNVR) and 134-164 (LLPPNTERIRTDSLDSSTLSSERSDSDQEDL). Residues 54-106 (NVRSVHNELEKHRRAQLRRCLEQLKQQVPLSMENSRHTTLSLLHRAKQHIKKL) form the bHLH domain.

In terms of assembly, efficient DNA binding requires dimerization with another bHLH protein. Binds DNA as a heterodimer with MAX.

Its subcellular location is the nucleus. Its function is as follows. Transcriptional repressor. Binds with MAX to form a sequence-specific DNA-binding protein complex which recognizes the core sequence 5'-CAC[GA]TG-3'. This chain is Max dimerization protein 3 (mxd3), found in Xenopus tropicalis (Western clawed frog).